The following is a 78-amino-acid chain: RNA-binding protein Hfq (78 aa).

A Sm domain is found at D10–V69.

The protein belongs to the Hfq family. As to quaternary structure, homohexamer.

Functionally, RNA chaperone that binds small regulatory RNA (sRNAs) and mRNAs to facilitate mRNA translational regulation in response to envelope stress, environmental stress and changes in metabolite concentrations. Also binds with high specificity to tRNAs. The protein is RNA-binding protein Hfq of Paraburkholderia phytofirmans (strain DSM 17436 / LMG 22146 / PsJN) (Burkholderia phytofirmans).